Consider the following 708-residue polypeptide: MAESGSTNPKSPSVVPDSTLGGLKRDLRNYHDGDDSNNLSIKKSKTTKMENNCREIVPLDVTPLSIVPPDTPKLSRQFWKAGDDDEAAPVPLYCSNDAAVRVHPQFLHANATSHKWALGALAELLDNSLDEVSNGATYVHVDSTINKRDGKSSILIVEDNGGGMNPSTFRECLSLGYSRKRNMANRVGQYGNGFKTSTMRLGADAIVFSRSRGINGNNPTQSIGMLSYTFLYETRKCEAIVPTVDYELVDNKWKEIVYNSTNEWLDNLETILRWSPYLSQQDLLDQFNHLEEQGTRIVIYNLWEDDEGKMELDFDTDPHDIQLRGVNRDEKNIDMAKTYPNSRHFLTYRHSLRSYASILYLKRPDNFRIILRGEDVEHHSVLDDMMKIEEKTYKPMRSPEWPDQEEMVASLKLGFVKDAHHHIDIQGFNVYHKNRLIKPFWRVWNAAGSDGRGVIGILEANFIQPAHNKQGFERTVVLAKLESRLVTHQKNYWSSRCHEIGYAPRRKQKNYESSVTETPRPFNNINVVKGSSSSTPVPVRVFRPNVEPSGRNQIPQVETRERSFDINPEIGAKNRSYYGLGISSFKETGSVNLEAELQKVKQESAKLVSELQRQKQLLELQLQESKAKIQNLEKAQREKEVLELQLKESKARIQNLENRQEGVSTIFQQERARRDVTEDGLRKKLREASDVIDGLRKQVDTFKGKRIL.

Residues 1–11 (MAESGSTNPKS) show a composition bias toward polar residues. Positions 1 to 47 (MAESGSTNPKSPSVVPDSTLGGLKRDLRNYHDGDDSNNLSIKKSKTT) are disordered. The span at 23 to 34 (LKRDLRNYHDGD) shows a compositional bias: basic and acidic residues. Residues 590–665 (SVNLEAELQK…LENRQEGVST (76 aa)) are a coiled coil. Residues 672–679 (ARRDVTED) carry the Nuclear localization signal motif.

The protein belongs to the MORC ATPase protein family. As to quaternary structure, homodimer and heterodimer. Component of an RNA-directed DNA methylation (RdDM) complex. It depends on Mg(2+) as a cofactor. Mn(2+) serves as cofactor.

It localises to the nucleus. Exhibits ATPase activity. Binds DNA/RNA in a non-specific manner and exhibits endonuclease activity. Probably involved in DNA repair. Involved in RNA-directed DNA methylation (RdDM) as a component of the RdDM machinery and required for gene silencing. May also be involved in the regulation of chromatin architecture to maintain gene silencing. In Arabidopsis thaliana (Mouse-ear cress), this protein is Protein MICRORCHIDIA 5.